Here is a 172-residue protein sequence, read N- to C-terminus: Large ribosomal subunit protein uL10 (172 aa).

Belongs to the universal ribosomal protein uL10 family. As to quaternary structure, part of the ribosomal stalk of the 50S ribosomal subunit. The N-terminus interacts with L11 and the large rRNA to form the base of the stalk. The C-terminus forms an elongated spine to which L12 dimers bind in a sequential fashion forming a multimeric L10(L12)X complex.

In terms of biological role, forms part of the ribosomal stalk, playing a central role in the interaction of the ribosome with GTP-bound translation factors. This chain is Large ribosomal subunit protein uL10, found in Nitrobacter hamburgensis (strain DSM 10229 / NCIMB 13809 / X14).